The following is a 360-amino-acid chain: Peptide chain release factor 1 (360 aa).

Gln-234 carries the N5-methylglutamine modification.

It belongs to the prokaryotic/mitochondrial release factor family. In terms of processing, methylated by PrmC. Methylation increases the termination efficiency of RF1.

Its subcellular location is the cytoplasm. Its function is as follows. Peptide chain release factor 1 directs the termination of translation in response to the peptide chain termination codons UAG and UAA. This Clostridium botulinum (strain Alaska E43 / Type E3) protein is Peptide chain release factor 1.